A 364-amino-acid polypeptide reads, in one-letter code: Histidinol-phosphate aminotransferase (364 aa).

Lysine 226 carries the N6-(pyridoxal phosphate)lysine modification.

It belongs to the class-II pyridoxal-phosphate-dependent aminotransferase family. Histidinol-phosphate aminotransferase subfamily. In terms of assembly, homodimer. The cofactor is pyridoxal 5'-phosphate.

The enzyme catalyses L-histidinol phosphate + 2-oxoglutarate = 3-(imidazol-4-yl)-2-oxopropyl phosphate + L-glutamate. Its pathway is amino-acid biosynthesis; L-histidine biosynthesis; L-histidine from 5-phospho-alpha-D-ribose 1-diphosphate: step 7/9. The polypeptide is Histidinol-phosphate aminotransferase (Campylobacter jejuni subsp. jejuni serotype O:2 (strain ATCC 700819 / NCTC 11168)).